Here is a 450-residue protein sequence, read N- to C-terminus: Exodeoxyribonuclease 7 large subunit (450 aa).

The protein belongs to the XseA family. As to quaternary structure, heterooligomer composed of large and small subunits.

The protein localises to the cytoplasm. It carries out the reaction Exonucleolytic cleavage in either 5'- to 3'- or 3'- to 5'-direction to yield nucleoside 5'-phosphates.. Bidirectionally degrades single-stranded DNA into large acid-insoluble oligonucleotides, which are then degraded further into small acid-soluble oligonucleotides. The polypeptide is Exodeoxyribonuclease 7 large subunit (Listeria welshimeri serovar 6b (strain ATCC 35897 / DSM 20650 / CCUG 15529 / CIP 8149 / NCTC 11857 / SLCC 5334 / V8)).